The sequence spans 309 residues: ATP synthase gamma chain (309 aa).

It belongs to the ATPase gamma chain family. As to quaternary structure, F-type ATPases have 2 components, CF(1) - the catalytic core - and CF(0) - the membrane proton channel. CF(1) has five subunits: alpha(3), beta(3), gamma(1), delta(1), epsilon(1). CF(0) has three main subunits: a, b and c.

The protein localises to the cell membrane. In terms of biological role, produces ATP from ADP in the presence of a proton gradient across the membrane. The gamma chain is believed to be important in regulating ATPase activity and the flow of protons through the CF(0) complex. The protein is ATP synthase gamma chain of Salinispora arenicola (strain CNS-205).